Reading from the N-terminus, the 548-residue chain is MAAKDVKFSTDARDRLLRGVDILANAVKVTLGPKGRNVVLDKSYGAPRITKDGVSVAKEIELKDKFENMGAQMVKEVASKSADVAGDGTTTATVLAQAIVREGVKSVAAGMNPMDLKRGIDLAVLAVVEDVKKRSKKIKTSAEVAQVGTISANGDEEVGKIIATAMEKVGNEGVITVEEAKGLDTELDVVEGMQFDRGYLSPYFVTNAEKMVADLENPYILLHEKKLSGLQALLPVLEAVVQSSRPLLIIAEDVEGEALATLVVNKLRGGLKVAAVKAPGFGDRRKAMLEDIAILTGGQVISEDLGIKLENVTIDMLGTAKKVTITKEETTLVDGAGDKKDIEARCSQIRANIEDTSSDYDREKLQERLAKLAGGVAVIKVGGATETEVKEKKDRVDDAMHATRAAVEEGVVAGGGVALLHAIRSLDSVKGANPDQNVGIEIVRRALQAPVRQIAENAGVDGAVVAGKLLENSDTDFGYNAQTGIYENLVTAGVIDPTKVVRAALQGAASIAGLLITTEAMVAEIPEKKDAMPSPDMGGMGGMGGMGF.

Residues T30 to P33, K51, D87 to T91, G415, and D496 contribute to the ATP site. Residues K529–F548 are disordered. Residues G538–F548 are compositionally biased toward gly residues.

This sequence belongs to the chaperonin (HSP60) family. As to quaternary structure, forms a cylinder of 14 subunits composed of two heptameric rings stacked back-to-back. Interacts with the co-chaperonin GroES.

Its subcellular location is the cytoplasm. The catalysed reaction is ATP + H2O + a folded polypeptide = ADP + phosphate + an unfolded polypeptide.. In terms of biological role, together with its co-chaperonin GroES, plays an essential role in assisting protein folding. The GroEL-GroES system forms a nano-cage that allows encapsulation of the non-native substrate proteins and provides a physical environment optimized to promote and accelerate protein folding. This is Chaperonin GroEL 2 from Rhodospirillum rubrum (strain ATCC 11170 / ATH 1.1.1 / DSM 467 / LMG 4362 / NCIMB 8255 / S1).